The chain runs to 127 residues: NADPH-dependent 7-cyano-7-deazaguanine reductase (127 aa).

The Thioimide intermediate role is filled by Cys40. Asp47 acts as the Proton donor in catalysis. Residues 62-64 (VEL) and 81-82 (HE) contribute to the substrate site.

The protein belongs to the GTP cyclohydrolase I family. QueF type 1 subfamily.

It localises to the cytoplasm. The catalysed reaction is 7-aminomethyl-7-carbaguanine + 2 NADP(+) = 7-cyano-7-deazaguanine + 2 NADPH + 3 H(+). It functions in the pathway tRNA modification; tRNA-queuosine biosynthesis. Functionally, catalyzes the NADPH-dependent reduction of 7-cyano-7-deazaguanine (preQ0) to 7-aminomethyl-7-deazaguanine (preQ1). The chain is NADPH-dependent 7-cyano-7-deazaguanine reductase from Campylobacter lari (strain RM2100 / D67 / ATCC BAA-1060).